A 134-amino-acid polypeptide reads, in one-letter code: RxLR effector protein 4 (134 aa).

Residues 1 to 22 (MRSLFYIAVAVAVFARSSAVAA) form the signal peptide. Positions 43–65 (AMASSDSRKRFLRATDPEDGDLQ) are disordered. Over residues 48-58 (DSRKRFLRATD) the composition is skewed to basic and acidic residues. Residues 52-71 (RFLRATDPEDGDLQADDEER) carry the RxLR-dEER motif.

It belongs to the RxLR effector family.

It localises to the secreted. Its function is as follows. Effector that enhances plant susceptibility to P.parasitica in Nicotiana benthamiana and Arabidopsis thaliana. Triggers non-specific cell death in a variety of plants, including tobacco, tomato, potato and A.thaliana. E4-induced cell death is dependent on HSP90, NPK and SGT1, suggesting that PpE4 is recognized by the plant immune system. The sequence is that of RxLR effector protein 4 from Phytophthora nicotianae (strain INRA-310) (Phytophthora parasitica).